The primary structure comprises 123 residues: UPF0102 protein DR_2282 (123 aa).

This sequence belongs to the UPF0102 family.

This is UPF0102 protein DR_2282 from Deinococcus radiodurans (strain ATCC 13939 / DSM 20539 / JCM 16871 / CCUG 27074 / LMG 4051 / NBRC 15346 / NCIMB 9279 / VKM B-1422 / R1).